A 440-amino-acid chain; its full sequence is Gamma-aminobutyric acid receptor subunit pi (440 aa).

An N-terminal signal peptide occupies residues 1-23 (MSYSLYLAFLCLSLLTQRTCIQG). Residues 24-241 (NQVNVEVSRS…LVLQFELRRN (218 aa)) lie on the Extracellular side of the membrane. N43, N102, and N145 each carry an N-linked (GlcNAc...) asparagine glycan. C160 and C174 form a disulfide bridge. Residues N196 and N228 are each glycosylated (N-linked (GlcNAc...) asparagine). A helical transmembrane segment spans residues 242-262 (VLYFILETYVPSTFLVVLSWV). The Cytoplasmic portion of the chain corresponds to 263-270 (SFWISLDS). The chain crosses the membrane as a helical span at residues 271–290 (VPARTCIGVTTVLSMTTLMI). The Extracellular segment spans residues 291–301 (GSRTSLPNTNC). Residues 302-322 (FIKAIDVYLGICFSFVFGALL) form a helical membrane-spanning segment. The Cytoplasmic segment spans residues 323 to 419 (EYAVAHYSSL…NPSNVDRYSK (97 aa)). Residues 420–440 (LLFPLIFMLANVFYWAYYMYF) traverse the membrane as a helical segment.

It belongs to the ligand-gated ion channel (TC 1.A.9) family. Gamma-aminobutyric acid receptor (TC 1.A.9.5) subfamily. GABRP sub-subfamily. As to quaternary structure, heteropentamer, formed by a combination of alpha (GABRA1-6), beta (GABRB1-3), gamma (GABRG1-3), delta (GABRD), epsilon (GABRE), rho (GABRR1-3), pi (GABRP) and theta (GABRQ) chains, each subunit exhibiting distinct physiological and pharmacological properties.

The protein resides in the cell membrane. It is found in the apical cell membrane. It carries out the reaction chloride(in) = chloride(out). Functionally, pi subunit of the heteropentameric ligand-gated chloride channel gated by gamma-aminobutyric acid (GABA). GABA-gated chloride channels, also named GABA(A) receptors (GABAAR), consist of five subunits arranged around a central pore and contain GABA active binding site(s) located at the alpha and beta subunit interfaces. When activated by GABA, GABAARs selectively allow the flow of chloride anions across the cell membrane down their electrochemical gradient. Pi-containing GABAARs are mostly located in peripheral tissues. In the uterus, pi subunits modulate uterus contraction by altering the sensitivity of GABAARs to pregnanolone. In the lungs, pi-containing GABAARs contribute to pulmonary fluid transport via luminal secretion of chloride. The sequence is that of Gamma-aminobutyric acid receptor subunit pi from Mus musculus (Mouse).